We begin with the raw amino-acid sequence, 564 residues long: Arginine--tRNA ligase (564 aa).

The 'HIGH' region motif lies at Pro124 to His134.

The protein belongs to the class-I aminoacyl-tRNA synthetase family. Monomer.

It is found in the cytoplasm. The catalysed reaction is tRNA(Arg) + L-arginine + ATP = L-arginyl-tRNA(Arg) + AMP + diphosphate. In Chlamydia caviae (strain ATCC VR-813 / DSM 19441 / 03DC25 / GPIC) (Chlamydophila caviae), this protein is Arginine--tRNA ligase.